Here is a 352-residue protein sequence, read N- to C-terminus: Ion-translocating oxidoreductase complex subunit D (352 aa).

The next 5 membrane-spanning stretches (helical) occupy residues 20–40, 42–62, 78–109, 123–143, and 148–168; these read IMLLVLLAAVPGIAAQLWFFG, GTLVQILLASVSALLAEALVL, ALLTGLLLAVSIPPLAPWWMVVLGTVFAVIIA, PAMIGYVVLLISFPVQMTSWL, and IAVNIPGFIDAIQVIFSGHTA. Position 187 is an FMN phosphoryl threonine (threonine 187). 4 consecutive transmembrane segments (helical) span residues 214–234, 242–262, 267–287, and 301–318; these read ILAGAGWQWVNLAWLAGGVWL, WHIPLSFLVTLALCATLGWLF, LAAPQIHLLSGATMLGAFFIL, and LMFGALAGLLVWLIRSFG.

Belongs to the NqrB/RnfD family. The complex is composed of six subunits: RsxA, RsxB, RsxC, RsxD, RsxE and RsxG. FMN is required as a cofactor.

It is found in the cell inner membrane. Functionally, part of a membrane-bound complex that couples electron transfer with translocation of ions across the membrane. Required to maintain the reduced state of SoxR. The protein is Ion-translocating oxidoreductase complex subunit D of Shigella flexneri serotype 5b (strain 8401).